A 606-amino-acid polypeptide reads, in one-letter code: EPM2A-interacting protein 1 (606 aa).

Ser147 is subject to Phosphoserine.

In terms of assembly, interacts with EPM2A.

It is found in the endoplasmic reticulum. This Mus musculus (Mouse) protein is EPM2A-interacting protein 1 (Epm2aip1).